The following is a 298-amino-acid chain: MQSVATNNITKTRNAHWRDYLELTKPRVVALLLLTAVVGMCLATEELVSLKVLVPALTGIGLMSAAAAAINHLVDRHIDAKMARTLRRPLPQGNLSPAKVTTFAASIGVIGFVTLYAWVNPLTAWLTFASMVGYAVVYTMFLKRATPQNIVIGGLAGAAPPLLGWTSVTNEINAPAVLLVMIIFTWTPPHFWALAVHRAKDYARAKVPMLPVTHGIEFTKTCIFLYTVLLTVVCLMPFLIGMTGMIYLVGVSVLNAIFLAYAWKLKYSPSKKTAFNMFAFSIWHLMLLFVILLVDHYV.

9 helical membrane passes run 28-48, 50-70, 95-117, 121-138, 149-169, 176-196, 222-242, 243-263, and 274-294; these read VVAL…EELV, LKVL…AAAI, LSPA…TLYA, PLTA…AVVY, NIVI…TSVT, AVLL…ALAV, CIFL…LIGM, TGMI…AYAW, and AFNM…ILLV.

Belongs to the UbiA prenyltransferase family. Protoheme IX farnesyltransferase subfamily.

It localises to the cell inner membrane. It catalyses the reaction heme b + (2E,6E)-farnesyl diphosphate + H2O = Fe(II)-heme o + diphosphate. It participates in porphyrin-containing compound metabolism; heme O biosynthesis; heme O from protoheme: step 1/1. Its function is as follows. Converts heme B (protoheme IX) to heme O by substitution of the vinyl group on carbon 2 of heme B porphyrin ring with a hydroxyethyl farnesyl side group. In Idiomarina loihiensis (strain ATCC BAA-735 / DSM 15497 / L2-TR), this protein is Protoheme IX farnesyltransferase.